Reading from the N-terminus, the 175-residue chain is Bcl-2-related protein A1 (175 aa).

A BH1 motif is present at residues 77 to 97; sequence KEFEDGIINWGRIVTIFAFEG. Positions 132-147 match the BH2 motif; sequence EWIRQNGGWENGFVKK.

This sequence belongs to the Bcl-2 family. Interacts directly with BAK1, BID, BMF and BBC3. Interacts directly with BCL2L11/BIM. Interacts with BAX isoform Sigma. Interacts directly with PMAIP1. Interacts with RTL10/BOP. Interacts with ING4. Interacts with UBQLN4. In terms of tissue distribution, seems to be restricted to the hematopoietic compartment. Expressed in peripheral blood, spleen, and bone marrow, at moderate levels in lung, small intestine and testis, at a minimal levels in other tissues. Also found in vascular smooth muscle cells and hematopoietic malignancies.

It localises to the cytoplasm. In terms of biological role, retards apoptosis induced by IL-3 deprivation. May function in the response of hemopoietic cells to external signals and in maintaining endothelial survival during infection. Can inhibit apoptosis induced by serum starvation in the mammary epithelial cell line HC11. This is Bcl-2-related protein A1 (BCL2A1) from Homo sapiens (Human).